A 365-amino-acid chain; its full sequence is Selina-4(15),7(11)-diene synthase ((2E,6E)-farnesyl diphosphate cyclizing) (365 aa).

Positions 82 and 87 each coordinate Mg(2+). A DDXXXE motif motif is present at residues 82–87 (DDGHCE). Position 178 (Arg178) interacts with substrate. Residues Asn224 and Ser228 each contribute to the Mg(2+) site. Lys231 serves as a coordination point for substrate. Glu232 contacts Mg(2+). Substrate is bound at residue 310–311 (RY).

This sequence belongs to the terpene synthase family. Monomer. It depends on Mg(2+) as a cofactor.

It catalyses the reaction (2E,6E)-farnesyl diphosphate = selina-4(15),7(11)-diene + diphosphate. It participates in secondary metabolite biosynthesis; terpenoid biosynthesis. Catalyzes the conversion of (2E,6E)-farnesyl diphosphate (FPP) to yield the bicyclic sesquiterpene selina-4(15),7(11)-diene via a 1,10-cyclization, which requires the abstraction of the pyrophosphate from FPP leading to a (E,E)-germacradienyl cation. The only accepted substrate is (2E,6E)-farnesyl diphosphate (FPP). In Streptomyces pristinaespiralis (strain ATCC 25486 / DSM 40338 / CBS 914.69 / JCM 4507 / KCC S-0507 / NBRC 13074 / NRRL 2958 / 5647), this protein is Selina-4(15),7(11)-diene synthase ((2E,6E)-farnesyl diphosphate cyclizing).